Consider the following 506-residue polypeptide: Maturase K (506 aa).

It belongs to the intron maturase 2 family. MatK subfamily.

Its subcellular location is the plastid. The protein localises to the chloroplast. In terms of biological role, usually encoded in the trnK tRNA gene intron. Probably assists in splicing its own and other chloroplast group II introns. The polypeptide is Maturase K (Trifolium microcephalum (Small-head clover)).